The primary structure comprises 485 residues: GTPase Der (485 aa).

EngA-type G domains follow at residues 3–167 (PTIA…PEPE) and 176–349 (PVFA…NAAM). Residues 9 to 16 (GRPNVGKS), 56 to 60 (DTGGF), 119 to 122 (NKGE), 182 to 189 (GRPNVGKS), 229 to 233 (DTAGV), and 294 to 297 (NKWD) contribute to the GTP site. A KH-like domain is found at 350 to 434 (IKMPTPKITR…PLRIQYNVSE (85 aa)). Positions 435–485 (NPYENADDKPKKKPLRRVSLSNRIEKREGRKEEKNRFKKKTKVSVKKQFSK) are disordered. The segment covering 457 to 469 (RIEKREGRKEEKN) has biased composition (basic and acidic residues). Positions 470-485 (RFKKKTKVSVKKQFSK) are enriched in basic residues.

This sequence belongs to the TRAFAC class TrmE-Era-EngA-EngB-Septin-like GTPase superfamily. EngA (Der) GTPase family. As to quaternary structure, associates with the 50S ribosomal subunit.

In terms of biological role, GTPase that plays an essential role in the late steps of ribosome biogenesis. In Neisseria meningitidis serogroup A / serotype 4A (strain DSM 15465 / Z2491), this protein is GTPase Der.